The primary structure comprises 233 residues: Homeobox protein Hox-B6b (233 aa).

The short motif at 136 to 141 (IYPWMQ) is the Antp-type hexapeptide element. The homeobox DNA-binding region spans 155–214 (GRRGRQTYTRYQTLELEKEFHFNRYLTRRRRIEISHALCLTERQIKIWFQNRRMKWKKEN). The disordered stretch occupies residues 213-233 (ENKLLNPSKTPEEEEEAEKKS). The span at 224 to 233 (EEEEEAEKKS) shows a compositional bias: acidic residues.

This sequence belongs to the Antp homeobox family.

The protein resides in the nucleus. In terms of biological role, sequence-specific transcription factor which is part of a developmental regulatory system that provides cells with specific positional identities on the anterior-posterior axis. This chain is Homeobox protein Hox-B6b (hoxb6b), found in Takifugu rubripes (Japanese pufferfish).